We begin with the raw amino-acid sequence, 997 residues long: Glutamate [NMDA] receptor subunit 1 (997 aa).

The N-terminal stretch at 1 to 26 (MAVAGFVFCWPLLGLTIVLLVAPIDA) is a signal peptide. Over 27–573 (AQRHTASDNP…TLVSFLQPFS (547 aa)) the chain is Extracellular. N-linked (GlcNAc...) asparagine glycosylation is found at Asn-258, Asn-314, Asn-345, Asn-397, Asn-454, Asn-481, and Asn-501. Glycine contacts are provided by residues 530–532 (PLT) and Arg-537. Residues 574–594 (NTLWILVMVSVHVVALVLYLL) form a helical membrane-spanning segment. Residues 595–651 (DRFSPFGRFKLSHSDSNEEKALNLSSAVWFAWGVLLNSGIGEGTPRSFSARVLGMVW) are Cytoplasmic-facing. The helical transmembrane segment at 652-672 (AGFAMIIVASYTANLAAFLVL) threads the bilayer. Residues 673–831 (ERPKTKLSGI…KTPNTLGLKN (159 aa)) are Extracellular-facing. Residue Asn-693 is glycosylated (N-linked (GlcNAc...) asparagine). Positions 703 and 747 each coordinate glycine. Residues 832–852 (MAGVFILVGVGIAGGVGLIII) form a helical membrane-spanning segment. At 853 to 997 (EVIYKKHQVK…YTSDVSHLVV (145 aa)) the chain is on the cytoplasmic side. The segment at 970–997 (LGKTRPQQSVLPPRYSPGYTSDVSHLVV) is disordered. Residues 987-997 (GYTSDVSHLVV) are compositionally biased toward polar residues.

The protein belongs to the glutamate-gated ion channel (TC 1.A.10.1) family. As to quaternary structure, forms a heteromeric NMDA channel with Nmdar2.

The protein localises to the cell membrane. It localises to the postsynaptic cell membrane. The protein resides in the postsynaptic density. In terms of biological role, NMDA receptor subtype of glutamate-gated ion channels with high calcium permeability and voltage-dependent sensitivity to magnesium. Mediated by glycine. This protein plays a key role in synaptic plasticity, synaptogenesis, excitotoxicity, memory acquisition and learning. It mediates neuronal functions in glutamate neurotransmission. Is involved in the cell surface targeting of NMDA receptors. Plays a role in associative learning and in long-term memory consolidation. The chain is Glutamate [NMDA] receptor subunit 1 from Drosophila yakuba (Fruit fly).